Here is a 396-residue protein sequence, read N- to C-terminus: 1-deoxy-D-xylulose 5-phosphate reductoisomerase (396 aa).

NADPH-binding residues include T10, G11, S12, I13, and N123. Residue K124 participates in 1-deoxy-D-xylulose 5-phosphate binding. E125 provides a ligand contact to NADPH. Position 149 (D149) interacts with Mn(2+). 1-deoxy-D-xylulose 5-phosphate contacts are provided by S150, E151, S185, and H208. Residue E151 participates in Mn(2+) binding. G214 is a binding site for NADPH. The 1-deoxy-D-xylulose 5-phosphate site is built by S221, N226, K227, and E230. Residue E230 coordinates Mn(2+).

The protein belongs to the DXR family. The cofactor is Mg(2+). Mn(2+) serves as cofactor.

It carries out the reaction 2-C-methyl-D-erythritol 4-phosphate + NADP(+) = 1-deoxy-D-xylulose 5-phosphate + NADPH + H(+). Its pathway is isoprenoid biosynthesis; isopentenyl diphosphate biosynthesis via DXP pathway; isopentenyl diphosphate from 1-deoxy-D-xylulose 5-phosphate: step 1/6. Functionally, catalyzes the NADPH-dependent rearrangement and reduction of 1-deoxy-D-xylulose-5-phosphate (DXP) to 2-C-methyl-D-erythritol 4-phosphate (MEP). The sequence is that of 1-deoxy-D-xylulose 5-phosphate reductoisomerase from Shewanella frigidimarina (strain NCIMB 400).